The sequence spans 575 residues: Alpha-(1,6)-fucosyltransferase (575 aa).

Residues 1–9 (MRAWTGSWR) lie on the Cytoplasmic side of the membrane. The chain crosses the membrane as a helical; Signal-anchor for type II membrane protein span at residues 10 to 30 (WIMLILFAWGTLLFYIGGHLV). Topologically, residues 31-575 (RDNDHPDHSS…KYPTYPEAEK (545 aa)) are lumenal. Intrachain disulfides connect Cys-204-Cys-266, Cys-212-Cys-230, and Cys-218-Cys-222. The GT23 domain occupies 206 to 493 (KARKLVCNIN…PDASANFHSL (288 aa)). Residue Ser-278 is modified to Phosphoserine. An SH3-binding motif is present at residues 299–305 (PRPPYLP). Residues 365-366 (RR) form an important for donor substrate binding region. Cys-465 and Cys-472 are oxidised to a cystine. The SH3 domain occupies 502 to 563 (QNAHNQIAVY…PSYKVREKIE (62 aa)).

This sequence belongs to the glycosyltransferase 23 family. Tyrosine phosphorylated by PKDCC/VLK.

It is found in the golgi apparatus. The protein resides in the golgi stack membrane. It carries out the reaction N(4)-{beta-D-GlcNAc-(1-&gt;2)-alpha-D-Man-(1-&gt;3)-[beta-D-GlcNAc-(1-&gt;2)-alpha-D-Man-(1-&gt;6)]-beta-D-Man-(1-&gt;4)-beta-D-GlcNAc-(1-&gt;4)-beta-D-GlcNAc}-L-asparaginyl-[protein] + GDP-beta-L-fucose = an N(4)-{beta-D-GlcNAc-(1-&gt;2)-alpha-D-Man-(1-&gt;3)-[beta-D-GlcNAc-(1-&gt;2)-alpha-D-Man-(1-&gt;6)]-beta-D-Man-(1-&gt;4)-beta-D-GlcNAc-(1-&gt;4)-[alpha-L-Fuc-(1-&gt;6)]-beta-D-GlcNAc}-L-asparaginyl-[protein] + GDP + H(+). Its pathway is protein modification; protein glycosylation. Its function is as follows. Catalyzes the addition of fucose in alpha 1-6 linkage to the first GlcNAc residue, next to the peptide chains in N-glycans. This is Alpha-(1,6)-fucosyltransferase (Fut8) from Mus musculus (Mouse).